The chain runs to 89 residues: Small ribosomal subunit protein uS15 (89 aa).

Belongs to the universal ribosomal protein uS15 family. In terms of assembly, part of the 30S ribosomal subunit. Forms a bridge to the 50S subunit in the 70S ribosome, contacting the 23S rRNA.

In terms of biological role, one of the primary rRNA binding proteins, it binds directly to 16S rRNA where it helps nucleate assembly of the platform of the 30S subunit by binding and bridging several RNA helices of the 16S rRNA. Forms an intersubunit bridge (bridge B4) with the 23S rRNA of the 50S subunit in the ribosome. This is Small ribosomal subunit protein uS15 from Marinobacter nauticus (strain ATCC 700491 / DSM 11845 / VT8) (Marinobacter aquaeolei).